A 445-amino-acid chain; its full sequence is Trigger factor (445 aa).

Positions 162-247 (GDQITMDAVG…VKAVHTAEPT (86 aa)) constitute a PPIase FKBP-type domain.

Belongs to the FKBP-type PPIase family. Tig subfamily.

It is found in the cytoplasm. The catalysed reaction is [protein]-peptidylproline (omega=180) = [protein]-peptidylproline (omega=0). Its function is as follows. Involved in protein export. Acts as a chaperone by maintaining the newly synthesized protein in an open conformation. Functions as a peptidyl-prolyl cis-trans isomerase. The chain is Trigger factor from Rickettsia bellii (strain OSU 85-389).